A 169-amino-acid chain; its full sequence is Large ribosomal subunit protein uL10 (169 aa).

Belongs to the universal ribosomal protein uL10 family. Part of the ribosomal stalk of the 50S ribosomal subunit. The N-terminus interacts with L11 and the large rRNA to form the base of the stalk. The C-terminus forms an elongated spine to which L12 dimers bind in a sequential fashion forming a multimeric L10(L12)X complex.

Its function is as follows. Forms part of the ribosomal stalk, playing a central role in the interaction of the ribosome with GTP-bound translation factors. This Staphylococcus saprophyticus subsp. saprophyticus (strain ATCC 15305 / DSM 20229 / NCIMB 8711 / NCTC 7292 / S-41) protein is Large ribosomal subunit protein uL10.